The sequence spans 677 residues: uncharacterized protein (677 aa).

The interval 1-87 is disordered; that stretch reads MGRHSKPDPE…PTGAEPIAAA (87 aa). Basic and acidic residues predominate over residues 17–29; sequence SDGHAAEQQHWED. Low complexity predominate over residues 51–64; sequence GHYSAVGGYSASGS. 4 helical membrane-spanning segments follow: residues 115–135, 192–212, 313–333, and 474–494; these read VSIGVIVALVAVVVMVAGVIL, VAVAVTSAGSDAVINGFIGKW, EAVAAASAPAGAPATAGIGAV, and ATLADTMVTASAGVAATIMLD.

The protein resides in the cell membrane. This is an uncharacterized protein from Mycobacterium tuberculosis (strain CDC 1551 / Oshkosh).